The following is a 302-amino-acid chain: tRNA-cytidine(32) 2-sulfurtransferase (302 aa).

The PP-loop motif signature appears at 44 to 49; that stretch reads SGGKDS. Positions 119, 122, and 210 each coordinate [4Fe-4S] cluster.

The protein belongs to the TtcA family. As to quaternary structure, homodimer. Requires Mg(2+) as cofactor. The cofactor is [4Fe-4S] cluster.

Its subcellular location is the cytoplasm. It carries out the reaction cytidine(32) in tRNA + S-sulfanyl-L-cysteinyl-[cysteine desulfurase] + AH2 + ATP = 2-thiocytidine(32) in tRNA + L-cysteinyl-[cysteine desulfurase] + A + AMP + diphosphate + H(+). It functions in the pathway tRNA modification. Its function is as follows. Catalyzes the ATP-dependent 2-thiolation of cytidine in position 32 of tRNA, to form 2-thiocytidine (s(2)C32). The sulfur atoms are provided by the cysteine/cysteine desulfurase (IscS) system. The chain is tRNA-cytidine(32) 2-sulfurtransferase from Tolumonas auensis (strain DSM 9187 / NBRC 110442 / TA 4).